The primary structure comprises 229 residues: Ribonuclease 3 (229 aa).

The RNase III domain occupies 5-127 (LAGLERKLGY…LIGAIYLDAD (123 aa)). Glu40 serves as a coordination point for Mg(2+). Asp44 is a catalytic residue. Mg(2+) contacts are provided by Asp113 and Glu116. The active site involves Glu116. The region spanning 154–224 (DPKTRLQEFL…AASALIALGV (71 aa)) is the DRBM domain.

This sequence belongs to the ribonuclease III family. In terms of assembly, homodimer. Mg(2+) is required as a cofactor.

The protein localises to the cytoplasm. The enzyme catalyses Endonucleolytic cleavage to 5'-phosphomonoester.. Functionally, digests double-stranded RNA. Involved in the processing of primary rRNA transcript to yield the immediate precursors to the large and small rRNAs (23S and 16S). Processes some mRNAs, and tRNAs when they are encoded in the rRNA operon. Processes pre-crRNA and tracrRNA of type II CRISPR loci if present in the organism. The polypeptide is Ribonuclease 3 (Pseudomonas putida (strain ATCC 700007 / DSM 6899 / JCM 31910 / BCRC 17059 / LMG 24140 / F1)).